The sequence spans 190 residues: Adenylate kinase (190 aa).

12–17 serves as a coordination point for ATP; sequence GSGKTT. The tract at residues 34 to 63 is NMP; that stretch reads STGELLRAEVASGSERGKIIEGFTSKGNLV. AMP-binding positions include threonine 35, arginine 40, 61–63, 88–91, and glutamine 95; these read NLV and GYPR. Positions 130 to 136 are LID; it reads GRARGAD. Arginine 131 provides a ligand contact to ATP. Residues arginine 133 and arginine 145 each coordinate AMP. Arginine 173 lines the ATP pocket.

Belongs to the adenylate kinase family. Monomer.

It localises to the cytoplasm. The catalysed reaction is AMP + ATP = 2 ADP. The protein operates within purine metabolism; AMP biosynthesis via salvage pathway; AMP from ADP: step 1/1. Its function is as follows. Catalyzes the reversible transfer of the terminal phosphate group between ATP and AMP. Plays an important role in cellular energy homeostasis and in adenine nucleotide metabolism. The sequence is that of Adenylate kinase from Wolinella succinogenes (strain ATCC 29543 / DSM 1740 / CCUG 13145 / JCM 31913 / LMG 7466 / NCTC 11488 / FDC 602W) (Vibrio succinogenes).